A 501-amino-acid polypeptide reads, in one-letter code: Zinc finger and SCAN domain-containing protein 12 (501 aa).

Residues lysine 20 and lysine 26 each participate in a glycyl lysine isopeptide (Lys-Gly) (interchain with G-Cter in SUMO2) cross-link. One can recognise an SCAN box domain in the interval 51 to 132; sequence QFCYQETSGP…DLERELDELG (82 aa). Residues 175-194 are disordered; it reads REAQEEQVSGVETGNEPRNV. Residues 180 to 194 show a composition bias toward polar residues; that stretch reads EQVSGVETGNEPRNV. Lysine 197 is covalently cross-linked (Glycyl lysine isopeptide (Lys-Gly) (interchain with G-Cter in SUMO2)). The disordered stretch occupies residues 223-255; it reads EAHNPGEESSGISHEDSQPLRNENGVNSPANSE. Residues 241-253 are compositionally biased toward polar residues; it reads PLRNENGVNSPAN. 6 C2H2-type zinc fingers span residues 269–291, 297–319, 325–347, 353–375, 381–403, and 409–431; these read HGCDECGKSFTQHSRLIEHKRVH, YKCEVCGKTFRWRTVLIRHKVVH, YKCNECGRAFGQWSALNQHQRLH, YHCNECGKAFCQKAGLFHHLKSH, YQCLQCNKSFNRRSTLSQHQGVH, and YECNDCGKAFVYNSSLATHQETH. The interval 429–450 is disordered; that stretch reads ETHHKEKPFTQSGPIQQQRNHT. The span at 437 to 447 shows a compositional bias: polar residues; the sequence is FTQSGPIQQQR. The C2H2-type 7 zinc finger occupies 455 to 477; that stretch reads YKCSVCGKAFIQKISLIEHEQIH. The C2H2-type 8; degenerate zinc finger occupies 483–501; sequence YKCAEGGKAFIQMSELTEH.

This sequence belongs to the krueppel C2H2-type zinc-finger protein family. In terms of tissue distribution, testis specific.

It is found in the nucleus. May be involved in transcriptional regulation. In Mus musculus (Mouse), this protein is Zinc finger and SCAN domain-containing protein 12 (Zscan12).